The following is a 217-amino-acid chain: Probable transaldolase (217 aa).

Lys83 serves as the catalytic Schiff-base intermediate with substrate.

The protein belongs to the transaldolase family. Type 3B subfamily.

The protein resides in the cytoplasm. It catalyses the reaction D-sedoheptulose 7-phosphate + D-glyceraldehyde 3-phosphate = D-erythrose 4-phosphate + beta-D-fructose 6-phosphate. It functions in the pathway carbohydrate degradation; pentose phosphate pathway; D-glyceraldehyde 3-phosphate and beta-D-fructose 6-phosphate from D-ribose 5-phosphate and D-xylulose 5-phosphate (non-oxidative stage): step 2/3. Its function is as follows. Transaldolase is important for the balance of metabolites in the pentose-phosphate pathway. The polypeptide is Probable transaldolase (Anaeromyxobacter dehalogenans (strain 2CP-C)).